The chain runs to 216 residues: UDP-N-acetylbacillosamine N-acetyltransferase (216 aa).

His137 functions as the Proton acceptor in the catalytic mechanism. His146 serves as a coordination point for acetyl-CoA.

This sequence belongs to the transferase hexapeptide repeat family. Forms oligomers.

The catalysed reaction is UDP-N-acetylbacillosamine + acetyl-CoA = UDP-N,N'-diacetylbacillosamine + CoA + H(+). Its function is as follows. Catalyzes the conversion of UDP-2,4,6-trideoxy-2-acetamido-4-amino glucose to UDP-2,4,6-trideoxy-2,4-diacetamido glucose, commonly known as UDP-N,N'-diacetylbacillosamine (UDP-diNAcBac). The chain is UDP-N-acetylbacillosamine N-acetyltransferase from Bacillus subtilis (strain 168).